We begin with the raw amino-acid sequence, 473 residues long: Adenosylhomocysteinase (473 aa).

Substrate is bound by residues Thr60, Asp135, and Glu197. Thr198–Thr200 provides a ligand contact to NAD(+). The substrate site is built by Lys227 and Asp231. Residues Asn232, Gly261 to Gly266, Glu284, Asn319, Ile340 to His342, and Asn385 contribute to the NAD(+) site.

The protein belongs to the adenosylhomocysteinase family. NAD(+) is required as a cofactor.

Its subcellular location is the cytoplasm. It catalyses the reaction S-adenosyl-L-homocysteine + H2O = L-homocysteine + adenosine. It functions in the pathway amino-acid biosynthesis; L-homocysteine biosynthesis; L-homocysteine from S-adenosyl-L-homocysteine: step 1/1. Its function is as follows. May play a key role in the regulation of the intracellular concentration of adenosylhomocysteine. The sequence is that of Adenosylhomocysteinase from Bradyrhizobium sp. (strain BTAi1 / ATCC BAA-1182).